The primary structure comprises 249 residues: Methionine aminopeptidase (249 aa).

Residue H77 participates in substrate binding. A divalent metal cation-binding residues include D94, D105, and H168. H175 provides a ligand contact to substrate. The a divalent metal cation site is built by E201 and E232.

It belongs to the peptidase M24A family. Methionine aminopeptidase type 1 subfamily. As to quaternary structure, monomer. Requires Co(2+) as cofactor. Zn(2+) serves as cofactor. The cofactor is Mn(2+). It depends on Fe(2+) as a cofactor.

The enzyme catalyses Release of N-terminal amino acids, preferentially methionine, from peptides and arylamides.. Removes the N-terminal methionine from nascent proteins. The N-terminal methionine is often cleaved when the second residue in the primary sequence is small and uncharged (Met-Ala-, Cys, Gly, Pro, Ser, Thr, or Val). Requires deformylation of the N(alpha)-formylated initiator methionine before it can be hydrolyzed. This chain is Methionine aminopeptidase, found in Clostridium perfringens (strain 13 / Type A).